The sequence spans 70 residues: Large ribosomal subunit protein eL38 (70 aa).

Residue Lys-4 forms a Glycyl lysine isopeptide (Lys-Gly) (interchain with G-Cter in SUMO2) linkage. The residue at position 9 (Lys-9) is an N6-acetyllysine; alternate. Lys-9 is covalently cross-linked (Glycyl lysine isopeptide (Lys-Gly) (interchain with G-Cter in SUMO2); alternate). Position 67 is an N6-acetyllysine (Lys-67).

Belongs to the eukaryotic ribosomal protein eL38 family. In terms of assembly, component of the large ribosomal subunit.

The protein localises to the cytoplasm. In terms of biological role, component of the large ribosomal subunit. The ribosome is a large ribonucleoprotein complex responsible for the synthesis of proteins in the cell. This Mus musculus (Mouse) protein is Large ribosomal subunit protein eL38 (Rpl38).